We begin with the raw amino-acid sequence, 143 residues long: Flagellar assembly factor FliW (143 aa).

The protein belongs to the FliW family. As to quaternary structure, interacts with translational regulator CsrA and flagellin(s).

It localises to the cytoplasm. Acts as an anti-CsrA protein, binds CsrA and prevents it from repressing translation of its target genes, one of which is flagellin. Binds to flagellin and participates in the assembly of the flagellum. The chain is Flagellar assembly factor FliW from Bacillus licheniformis (strain ATCC 14580 / DSM 13 / JCM 2505 / CCUG 7422 / NBRC 12200 / NCIMB 9375 / NCTC 10341 / NRRL NRS-1264 / Gibson 46).